We begin with the raw amino-acid sequence, 273 residues long: Large ribosomal subunit protein uL2 (273 aa).

2 disordered regions span residues 28–54 (KPYA…TRHI) and 221–273 (RGTA…RRTK). Residues 39 to 48 (KSGGRNNNGR) show a composition bias toward low complexity.

It belongs to the universal ribosomal protein uL2 family. In terms of assembly, part of the 50S ribosomal subunit. Forms a bridge to the 30S subunit in the 70S ribosome.

Its function is as follows. One of the primary rRNA binding proteins. Required for association of the 30S and 50S subunits to form the 70S ribosome, for tRNA binding and peptide bond formation. It has been suggested to have peptidyltransferase activity; this is somewhat controversial. Makes several contacts with the 16S rRNA in the 70S ribosome. In Pectobacterium carotovorum subsp. carotovorum (strain PC1), this protein is Large ribosomal subunit protein uL2.